The sequence spans 153 residues: Transcription antitermination protein NusB (153 aa).

Belongs to the NusB family.

Functionally, involved in transcription antitermination. Required for transcription of ribosomal RNA (rRNA) genes. Binds specifically to the boxA antiterminator sequence of the ribosomal RNA (rrn) operons. In Nitratidesulfovibrio vulgaris (strain ATCC 29579 / DSM 644 / CCUG 34227 / NCIMB 8303 / VKM B-1760 / Hildenborough) (Desulfovibrio vulgaris), this protein is Transcription antitermination protein NusB.